A 230-amino-acid chain; its full sequence is Modulator of macroautophagy TMEM150B (230 aa).

M1 is a topological domain (cytoplasmic). Residues 2-22 (WAWALLPICLTIWATAGIWIV) form a helical membrane-spanning segment. Residues 23-50 (YGMSVSNGSVNLTDGFPFISLCGTYPPQ) are Extracellular-facing. Residues N29 and N33 are each glycosylated (N-linked (GlcNAc...) asparagine). Residues 51 to 71 (SCVFGQVLNVGAMLGVWISVI) form a helical membrane-spanning segment. Over 72–83 (RFQQIRDYGCHS) the chain is Cytoplasmic. A helical membrane pass occupies residues 84 to 104 (VLNSVSLAMGLLCALGTSIVG). Topologically, residues 105–115 (NFQQSNQLETH) are extracellular. A helical membrane pass occupies residues 116-136 (LAGAFLAFVIGNIYFWMQTVL). Residues 137-150 (TYMVKPKHGGCYIG) lie on the Cytoplasmic side of the membrane. Residues 151 to 171 (PIRFCLSVACTALIVLMAVFL) form a helical membrane-spanning segment. Residues 172–183 (KLNMKSISAICE) lie on the Extracellular side of the membrane. A helical membrane pass occupies residues 184–204 (WIVAMILFLLYGLFSVDFWHL). Residues 205-230 (DGHYFHVKKRTAIPNEVEVSTVTLNI) are Cytoplasmic-facing.

This sequence belongs to the DRAM/TMEM150 family.

It localises to the cell membrane. The protein resides in the endosome membrane. It is found in the cytoplasmic vesicle. The protein localises to the autophagosome membrane. Its function is as follows. Modulator of macroautophagy that causes accumulation of autophagosomes under basal conditions and enhances autophagic flux. Represses cell death and promotes long-term clonogenic survival of cells grown in the absence of glucose in a macroautophagy-independent manner. May have some role in extracellular matrix engulfment or growth factor receptor recycling, both of which can modulate cell survival. The chain is Modulator of macroautophagy TMEM150B from Xenopus tropicalis (Western clawed frog).